The primary structure comprises 886 residues: MILLKELQIKNFRSHSDSKIEFDTGINLIAGRNGAGKSSILEAILVAFYGLKPATLRKNDLVRVNSSGYSLSLTFSLNGDDYTISRKSNGESILTGKEIVEGDSNITEWVERHLCPAHVFTGAIYVRQGEIDSIIRDDESRERIIRQITRIEDYENAWKNLGAVIRMLEREKERLKEFLSQEEQIKRQKEEKKAEIERISEEIKSIESLREKLSEEVRNLESRLKELEEHKSRLESLRKQESSVLQEVRGLEEKLRELEKQLKEVVERIEDLEKKAKEVKELKPKAERYSILEKLLSEINQALRDVEKREGDLTREAAGIQAQLKKAEEDNSKLEEITKRIEELERELERFEKSHRLLETLKPKMDRMQGIKAKLEEKNLTPDKVEKMYDLLSKAKEEEKEITEKLKKLIAKKSSLKTRGAQLKKAVEELKSAERTCPVCGRELDEEHRKNIMAEYTREMKRIAEELAKADEIEKKLKERLEKVEKALEKQETVLKYRQMVDELKALENELSSHDAEKLSAESEEYRKVKERLDGLRGQQKILLSSASRIKELKSSLREIEEALKNVESERGELHRKIREEGFESLEELEREVQSLRPFYNKWLELKDAESRLESELKRREKLEDEISEAIAKLEEANGKAEEIRGQIDELLRIYSEEEHRRLSDEHLRKSKELAGLKSRLETLRESLQSAEKDLKFLEEQLAKMDEYRKKVEVFEKIAIPELTRIREKFRKYRNLVAENSMREVERYASQIFEELTEGKYSGVRLKKTTERGKEKLKVFVVYQGEEREIGFLSGGEIIALGLAFRLALSMFMIRGKIPLLILDEPTPFLDEERRRKLVDITTNYLRKIPQVIIVSHDEELKDAADKVIFVESQGGVSRVRYVEAQ.

Residues Arg-13, 33 to 39 (NGAGKSS), and Gln-128 each bind ATP. 2 coiled-coil regions span residues 183–360 (EQIK…LLET) and 400–433 (KEIT…LKSA). Residues 392–489 (LSKAKEEEKE…RLEKVEKALE (98 aa)) form the Zinc-hook domain. Residues Cys-437 and Cys-440 each coordinate Zn(2+). Coiled-coil stretches lie at residues 489–518 (EKQE…DAEK) and 545–713 (SSAS…KKVE). 792–797 (FLSGGE) contacts ATP.

This sequence belongs to the SMC family. RAD50 subfamily. Homodimer. Forms a heterotetramer composed of two Mre11 subunits and two Rad50 subunits. The cofactor is Zn(2+).

In terms of biological role, part of the Rad50/Mre11 complex, which is involved in the early steps of DNA double-strand break (DSB) repair. The complex may facilitate opening of the processed DNA ends to aid in the recruitment of HerA and NurA. Rad50 controls the balance between DNA end bridging and DNA resection via ATP-dependent structural rearrangements of the Rad50/Mre11 complex. In Archaeoglobus fulgidus (strain ATCC 49558 / DSM 4304 / JCM 9628 / NBRC 100126 / VC-16), this protein is DNA double-strand break repair Rad50 ATPase.